Here is a 306-residue protein sequence, read N- to C-terminus: Epoxyqueuosine reductase (306 aa).

Aspartate 131 functions as the Proton donor in the catalytic mechanism. The 4Fe-4S ferredoxin-type domain maps to 173–205; that stretch reads LDLTYDHPVTDHCGTCTACIDACPTQAIVQPYV. Residues cysteine 185, cysteine 188, cysteine 191, cysteine 195, cysteine 211, cysteine 238, cysteine 241, and cysteine 245 each contribute to the [4Fe-4S] cluster site.

Belongs to the QueG family. As to quaternary structure, monomer. Cob(II)alamin serves as cofactor. It depends on [4Fe-4S] cluster as a cofactor.

The protein localises to the cytoplasm. The enzyme catalyses epoxyqueuosine(34) in tRNA + AH2 = queuosine(34) in tRNA + A + H2O. It participates in tRNA modification; tRNA-queuosine biosynthesis. Catalyzes the conversion of epoxyqueuosine (oQ) to queuosine (Q), which is a hypermodified base found in the wobble positions of tRNA(Asp), tRNA(Asn), tRNA(His) and tRNA(Tyr). The polypeptide is Epoxyqueuosine reductase (Cellulophaga algicola (strain DSM 14237 / IC166 / ACAM 630)).